The sequence spans 237 residues: Ras modification protein ERF4 (237 aa).

Belongs to the ERF4 family. As to quaternary structure, interacts with ERF2.

It localises to the endoplasmic reticulum membrane. In terms of biological role, the ERF2-SHR5 complex is a palmitoyltransferase specific for Ras proteins. Palmitoylates RAS2, which is required for its proper plasma membrane localization. This is Ras modification protein ERF4 (SHR5) from Saccharomyces cerevisiae (strain ATCC 204508 / S288c) (Baker's yeast).